A 561-amino-acid polypeptide reads, in one-letter code: Dihydroxy-acid dehydratase (561 aa).

Position 78 (aspartate 78) interacts with Mg(2+). A [2Fe-2S] cluster-binding site is contributed by cysteine 119. Mg(2+) contacts are provided by aspartate 120 and lysine 121. N6-carboxylysine is present on lysine 121. Residue cysteine 192 participates in [2Fe-2S] cluster binding. Glutamate 448 serves as a coordination point for Mg(2+). Serine 474 serves as the catalytic Proton acceptor.

The protein belongs to the IlvD/Edd family. In terms of assembly, homodimer. [2Fe-2S] cluster is required as a cofactor. Mg(2+) serves as cofactor.

The catalysed reaction is (2R)-2,3-dihydroxy-3-methylbutanoate = 3-methyl-2-oxobutanoate + H2O. It catalyses the reaction (2R,3R)-2,3-dihydroxy-3-methylpentanoate = (S)-3-methyl-2-oxopentanoate + H2O. It functions in the pathway amino-acid biosynthesis; L-isoleucine biosynthesis; L-isoleucine from 2-oxobutanoate: step 3/4. The protein operates within amino-acid biosynthesis; L-valine biosynthesis; L-valine from pyruvate: step 3/4. Functions in the biosynthesis of branched-chain amino acids. Catalyzes the dehydration of (2R,3R)-2,3-dihydroxy-3-methylpentanoate (2,3-dihydroxy-3-methylvalerate) into 2-oxo-3-methylpentanoate (2-oxo-3-methylvalerate) and of (2R)-2,3-dihydroxy-3-methylbutanoate (2,3-dihydroxyisovalerate) into 2-oxo-3-methylbutanoate (2-oxoisovalerate), the penultimate precursor to L-isoleucine and L-valine, respectively. The polypeptide is Dihydroxy-acid dehydratase (Sulfurimonas denitrificans (strain ATCC 33889 / DSM 1251) (Thiomicrospira denitrificans (strain ATCC 33889 / DSM 1251))).